We begin with the raw amino-acid sequence, 406 residues long: 12S rRNA N(4)-cytidine methyltransferase METTL15 (406 aa).

A mitochondrion-targeting transit peptide spans 1–22; that stretch reads MLRYPYFYRTYNRLFSHFVDSG. S-adenosyl-L-methionine-binding positions include 100–102, D119, F146, D169, and Q176; that span reads GGH. S358 carries the phosphoserine modification.

This sequence belongs to the methyltransferase superfamily. RsmH family.

The protein resides in the mitochondrion matrix. It catalyses the reaction cytidine(839) in 12S rRNA + S-adenosyl-L-methionine = N(4)-methylcytidine(839) in 12S rRNA + S-adenosyl-L-homocysteine + H(+). N4-methylcytidine (m4C) methyltransferase responsible for the methylation of position C839 in mitochondrial 12S rRNA. Involved in the stabilization of 12S rRNA folding, therefore facilitating the assembly of the mitochondrial small ribosomal subunits. The polypeptide is 12S rRNA N(4)-cytidine methyltransferase METTL15 (Mus musculus (Mouse)).